The sequence spans 130 residues: Small ribosomal subunit protein uS8 (130 aa).

It belongs to the universal ribosomal protein uS8 family. In terms of assembly, part of the 30S ribosomal subunit.

One of the primary rRNA binding proteins, it binds directly to 16S rRNA central domain where it helps coordinate assembly of the platform of the 30S subunit. The protein is Small ribosomal subunit protein uS8 of Natronomonas pharaonis (strain ATCC 35678 / DSM 2160 / CIP 103997 / JCM 8858 / NBRC 14720 / NCIMB 2260 / Gabara) (Halobacterium pharaonis).